The primary structure comprises 274 residues: THAP domain-containing protein 8 (274 aa).

The segment at 1 to 85 adopts a THAP-type zinc-finger fold; it reads MPKYCRAPNC…LRPDAVPSIF (85 aa). Positions 83-121 are disordered; the sequence is SIFSRGPPAKSQRRTRSTQKPVSPPPPLQKNTPLPQSPA.

The chain is THAP domain-containing protein 8 (THAP8) from Homo sapiens (Human).